Consider the following 101-residue polypeptide: Aspartyl/glutamyl-tRNA(Asn/Gln) amidotransferase subunit C (101 aa).

This sequence belongs to the GatC family. In terms of assembly, heterotrimer of A, B and C subunits.

It catalyses the reaction L-glutamyl-tRNA(Gln) + L-glutamine + ATP + H2O = L-glutaminyl-tRNA(Gln) + L-glutamate + ADP + phosphate + H(+). The enzyme catalyses L-aspartyl-tRNA(Asn) + L-glutamine + ATP + H2O = L-asparaginyl-tRNA(Asn) + L-glutamate + ADP + phosphate + 2 H(+). In terms of biological role, allows the formation of correctly charged Asn-tRNA(Asn) or Gln-tRNA(Gln) through the transamidation of misacylated Asp-tRNA(Asn) or Glu-tRNA(Gln) in organisms which lack either or both of asparaginyl-tRNA or glutaminyl-tRNA synthetases. The reaction takes place in the presence of glutamine and ATP through an activated phospho-Asp-tRNA(Asn) or phospho-Glu-tRNA(Gln). The chain is Aspartyl/glutamyl-tRNA(Asn/Gln) amidotransferase subunit C from Lactobacillus delbrueckii subsp. bulgaricus (strain ATCC 11842 / DSM 20081 / BCRC 10696 / JCM 1002 / NBRC 13953 / NCIMB 11778 / NCTC 12712 / WDCM 00102 / Lb 14).